The sequence spans 135 residues: Small ribosomal subunit protein uS11 (135 aa).

Low complexity predominate over residues methionine 1–valine 11. Positions methionine 1–valine 22 are disordered.

This sequence belongs to the universal ribosomal protein uS11 family. In terms of assembly, part of the 30S ribosomal subunit. Interacts with proteins S7 and S18. Binds to IF-3.

Functionally, located on the platform of the 30S subunit, it bridges several disparate RNA helices of the 16S rRNA. Forms part of the Shine-Dalgarno cleft in the 70S ribosome. In Salinispora tropica (strain ATCC BAA-916 / DSM 44818 / JCM 13857 / NBRC 105044 / CNB-440), this protein is Small ribosomal subunit protein uS11.